We begin with the raw amino-acid sequence, 385 residues long: Succinate--CoA ligase [ADP-forming] subunit beta (385 aa).

Residues 9-241 form the ATP-grasp domain; it reads KELLRDFGIN…IDEEEPSELE (233 aa). ATP-binding positions include Lys46, 53–55, Glu99, Thr102, and Glu107; that span reads GRG. Residues Asn196 and Asp210 each coordinate Mg(2+). Substrate is bound by residues Asn261 and 318-320; that span reads GIV.

The protein belongs to the succinate/malate CoA ligase beta subunit family. As to quaternary structure, heterotetramer of two alpha and two beta subunits. The cofactor is Mg(2+).

The catalysed reaction is succinate + ATP + CoA = succinyl-CoA + ADP + phosphate. The enzyme catalyses GTP + succinate + CoA = succinyl-CoA + GDP + phosphate. It participates in carbohydrate metabolism; tricarboxylic acid cycle; succinate from succinyl-CoA (ligase route): step 1/1. Succinyl-CoA synthetase functions in the citric acid cycle (TCA), coupling the hydrolysis of succinyl-CoA to the synthesis of either ATP or GTP and thus represents the only step of substrate-level phosphorylation in the TCA. The beta subunit provides nucleotide specificity of the enzyme and binds the substrate succinate, while the binding sites for coenzyme A and phosphate are found in the alpha subunit. The chain is Succinate--CoA ligase [ADP-forming] subunit beta from Campylobacter fetus subsp. fetus (strain 82-40).